The following is a 396-amino-acid chain: Schizokinen exporter SchE (396 aa).

An N-terminal signal peptide occupies residues Met-1–Ala-25. Over Leu-26–Val-39 the chain is Cytoplasmic. A helical transmembrane segment spans residues Ile-40–Ile-60. Topologically, residues Asp-61–Gly-73 are periplasmic. The helical transmembrane segment at Trp-74–Ile-94 threads the bilayer. The Cytoplasmic portion of the chain corresponds to Gln-95 to Cys-104. Residues Met-105–Leu-127 traverse the membrane as a helical segment. Residues Glu-128 to Ala-137 lie on the Periplasmic side of the membrane. The helical transmembrane segment at Ile-138 to Leu-158 threads the bilayer. Residues Asp-159–Gly-162 lie on the Cytoplasmic side of the membrane. The helical transmembrane segment at Trp-163 to Ile-183 threads the bilayer. The Periplasmic segment spans residues Tyr-184–Ala-214. A helical membrane pass occupies residues Leu-215–Ile-235. Over Arg-236–Trp-251 the chain is Cytoplasmic. The helical transmembrane segment at Ile-252 to Ile-272 threads the bilayer. Over Val-273–Leu-281 the chain is Periplasmic. Residues Ile-282 to Val-302 traverse the membrane as a helical segment. Over Ser-303–Ser-304 the chain is Cytoplasmic. The chain crosses the membrane as a helical span at residues Leu-305–Ala-325. Residues Leu-326–Gln-346 are Periplasmic-facing. Helical transmembrane passes span Val-347–Thr-367 and Met-368–Ile-388. Residues Thr-389–Ser-396 lie on the Periplasmic side of the membrane.

This sequence belongs to the major facilitator superfamily.

Its subcellular location is the cell inner membrane. Functionally, involved in the TolC-like protein HgdD-dependent secretion of schizokinen, a dihydroxamate-type siderophore. Transports schizokinen from the cytoplasm to the periplasm. In Nostoc sp. (strain PCC 7120 / SAG 25.82 / UTEX 2576), this protein is Schizokinen exporter SchE.